Consider the following 251-residue polypeptide: Histocompatibility antigen 60b (251 aa).

The N-terminal stretch at 1-24 (MAKSSLSLNWSLLVLLNFLGATLS) is a signal peptide. The Extracellular segment spans residues 25–212 (TGTDSLSCEL…NSDTQGLSFT (188 aa)). N-linked (GlcNAc...) asparagine glycans are attached at residues asparagine 63, asparagine 93, asparagine 126, and asparagine 189. The chain crosses the membrane as a helical span at residues 213–233 (WIVIICIGGIVSFMAFMVFAW). Residues 234–251 (CMLKKKKGALCCSSSSTT) are Cytoplasmic-facing.

This sequence belongs to the NKG2D ligand family. In strain C57BL/6J, strongly expressed in cardiac muscle and skeletal muscle, with lower expression levels in spleen, liver, kidney and thymus. In strain BALB/cJ, weakly expressed in cardiac muscle, spleen, kidney and thymus.

The protein localises to the cell membrane. In terms of biological role, ligand for the KLRK1 immunosurveillance receptor. Binding to KLRK1 stimulates cell lysis in vitro. This chain is Histocompatibility antigen 60b, found in Mus musculus (Mouse).